The chain runs to 173 residues: Ribosome maturation factor RimM (173 aa).

The 75-residue stretch at 95-169 folds into the PRC barrel domain; sequence EGSYYFKDIL…RIEVTLLEGL (75 aa).

This sequence belongs to the RimM family. In terms of assembly, binds ribosomal protein uS19.

Its subcellular location is the cytoplasm. Functionally, an accessory protein needed during the final step in the assembly of 30S ribosomal subunit, possibly for assembly of the head region. Essential for efficient processing of 16S rRNA. May be needed both before and after RbfA during the maturation of 16S rRNA. It has affinity for free ribosomal 30S subunits but not for 70S ribosomes. This chain is Ribosome maturation factor RimM, found in Lactobacillus johnsonii (strain CNCM I-12250 / La1 / NCC 533).